Consider the following 928-residue polypeptide: Serine/threonine-protein kinase atg1 (928 aa).

Residues 6 to 315 (YTRLDEIGRG…FPEFFENEVI (310 aa)) form the Protein kinase domain. ATP is bound by residues 12–20 (IGRGSFATV) and Lys35. Catalysis depends on Asp149, which acts as the Proton acceptor. 2 disordered regions span residues 318–470 (PIPG…EQER) and 544–571 (FSGR…PTSA). A compositionally biased stretch (basic and acidic residues) spans 359–371 (TRREREVNREDVY). Positions 437–452 (TTTAIERQRSRNTYSE) are enriched in polar residues. 2 stretches are compositionally biased toward basic and acidic residues: residues 459–470 (QPADKLKEEQER) and 548–564 (SRAD…ERRY).

The protein belongs to the protein kinase superfamily. Ser/Thr protein kinase family. APG1/unc-51/ULK1 subfamily. Homodimer. Forms a ternary complex with ATG13 and ATG17.

It is found in the cytoplasm. The protein localises to the preautophagosomal structure membrane. It catalyses the reaction L-seryl-[protein] + ATP = O-phospho-L-seryl-[protein] + ADP + H(+). It carries out the reaction L-threonyl-[protein] + ATP = O-phospho-L-threonyl-[protein] + ADP + H(+). In terms of biological role, serine/threonine protein kinase involved in the cytoplasm to vacuole transport (Cvt) and found to be essential in autophagy, where it is required for the formation of autophagosomes. Involved in the clearance of protein aggregates which cannot be efficiently cleared by the proteasome. Required for selective autophagic degradation of the nucleus (nucleophagy) as well as for mitophagy which contributes to regulate mitochondrial quantity and quality by eliminating the mitochondria to a basal level to fulfill cellular energy requirements and preventing excess ROS production. Also involved in endoplasmic reticulum-specific autophagic process, in selective removal of ER-associated degradation (ERAD) substrates. Plays a key role in ATG9 and ATG23 cycling through the pre-autophagosomal structure and is necessary to promote ATG18 binding to ATG9 through phosphorylation of ATG9. Catalyzes phosphorylation of ATG4, decreasing the interaction between ATG4 and ATG8 and impairing deconjugation of PE-conjugated forms of ATG8. The chain is Serine/threonine-protein kinase atg1 from Aspergillus clavatus (strain ATCC 1007 / CBS 513.65 / DSM 816 / NCTC 3887 / NRRL 1 / QM 1276 / 107).